The chain runs to 141 residues: MATIKVDVVSAEEQIFSGQAKFVALPGEAGELGILPGHTPLITRIRPGAVRIESESGDEEFVFVAGGILEVQPGAVTVLADTAIRGKDLDAAKAEEARKRAEETLQNAKSDIDLAKAQSELATAMAQLEAIQRLAKIRGKH.

This sequence belongs to the ATPase epsilon chain family. In terms of assembly, F-type ATPases have 2 components, CF(1) - the catalytic core - and CF(0) - the membrane proton channel. CF(1) has five subunits: alpha(3), beta(3), gamma(1), delta(1), epsilon(1). CF(0) has three main subunits: a, b and c.

Its subcellular location is the cell inner membrane. Its function is as follows. Produces ATP from ADP in the presence of a proton gradient across the membrane. The protein is ATP synthase epsilon chain of Burkholderia mallei (strain NCTC 10247).